A 354-amino-acid chain; its full sequence is Peptide chain release factor 1 (354 aa).

Q230 carries the N5-methylglutamine modification. Residues 282–301 (KQASDAIKKQMIGSGDRSER) form a disordered region.

The protein belongs to the prokaryotic/mitochondrial release factor family. In terms of processing, methylated by PrmC. Methylation increases the termination efficiency of RF1.

The protein localises to the cytoplasm. Its function is as follows. Peptide chain release factor 1 directs the termination of translation in response to the peptide chain termination codons UAG and UAA. The protein is Peptide chain release factor 1 of Leptospira borgpetersenii serovar Hardjo-bovis (strain L550).